The chain runs to 150 residues: MKIVVQRVKQASVTNESIHEEIGKGLCLLVGVGQDSTEKDVEAVAKKIVNARIFEDENGKLNLNVQQVGGAILSISQFTLYADVKKGNRPGFTNSKPPEEANRLYEAFNEALCQYGVEVKTGEFGTDMLVDIANDGPVTIIYESQDGKII.

Residues Gly-136–Pro-137 carry the Gly-cisPro motif, important for rejection of L-amino acids motif.

Belongs to the DTD family. Homodimer.

Its subcellular location is the cytoplasm. The catalysed reaction is glycyl-tRNA(Ala) + H2O = tRNA(Ala) + glycine + H(+). It catalyses the reaction a D-aminoacyl-tRNA + H2O = a tRNA + a D-alpha-amino acid + H(+). Its function is as follows. An aminoacyl-tRNA editing enzyme that deacylates mischarged D-aminoacyl-tRNAs. Also deacylates mischarged glycyl-tRNA(Ala), protecting cells against glycine mischarging by AlaRS. Acts via tRNA-based rather than protein-based catalysis; rejects L-amino acids rather than detecting D-amino acids in the active site. By recycling D-aminoacyl-tRNA to D-amino acids and free tRNA molecules, this enzyme counteracts the toxicity associated with the formation of D-aminoacyl-tRNA entities in vivo and helps enforce protein L-homochirality. The protein is D-aminoacyl-tRNA deacylase of Staphylococcus carnosus (strain TM300).